Reading from the N-terminus, the 167-residue chain is uncharacterized protein (167 aa).

A helical membrane pass occupies residues 5–27 (LILLTFVSFVFSKTFYYDVYVFF).

It is found in the membrane. This is an uncharacterized protein from Aquifex aeolicus (strain VF5).